A 201-amino-acid polypeptide reads, in one-letter code: FMN-dependent NADH:quinone oxidoreductase (201 aa).

FMN contacts are provided by residues serine 10, 16–18 (SQS), 96–99 (MYNF), and 140–143 (SRGG).

It belongs to the azoreductase type 1 family. As to quaternary structure, homodimer. Requires FMN as cofactor.

The enzyme catalyses 2 a quinone + NADH + H(+) = 2 a 1,4-benzosemiquinone + NAD(+). It carries out the reaction N,N-dimethyl-1,4-phenylenediamine + anthranilate + 2 NAD(+) = 2-(4-dimethylaminophenyl)diazenylbenzoate + 2 NADH + 2 H(+). Its function is as follows. Quinone reductase that provides resistance to thiol-specific stress caused by electrophilic quinones. In terms of biological role, also exhibits azoreductase activity. Catalyzes the reductive cleavage of the azo bond in aromatic azo compounds to the corresponding amines. This Escherichia coli O157:H7 protein is FMN-dependent NADH:quinone oxidoreductase.